A 481-amino-acid chain; its full sequence is WD repeat-containing protein 55 homolog (481 aa).

Residues 1–116 (MHTHNHFKTP…NRDVETNFDL (116 aa)) form a disordered region. Composition is skewed to acidic residues over residues 12-23 (DAEEVDDLDDEM), 31-46 (IEQE…DDGF), and 68-81 (DSFD…DSDD). 6 WD repeats span residues 144–183 (KLED…NKLI), 188–227 (VHSK…LKKL), 231–269 (AHDD…HVFE), 272–311 (QIDD…LYVQ), 314–353 (PYEE…YHCD), and 398–437 (QHNM…DFGD).

Belongs to the WD repeat WDR55 family.

The sequence is that of WD repeat-containing protein 55 homolog from Drosophila ananassae (Fruit fly).